The chain runs to 1319 residues: DNA-directed RNA polymerase subunit beta' (1319 aa).

Positions 59, 61, 74, and 77 each coordinate Zn(2+). Mg(2+)-binding residues include Asp449, Asp451, and Asp453. 4 residues coordinate Zn(2+): Cys773, Cys846, Cys853, and Cys856.

Belongs to the RNA polymerase beta' chain family. The RNAP catalytic core consists of 2 alpha, 1 beta, 1 beta' and 1 omega subunit. When a sigma factor is associated with the core the holoenzyme is formed, which can initiate transcription. It depends on Mg(2+) as a cofactor. Requires Zn(2+) as cofactor.

The catalysed reaction is RNA(n) + a ribonucleoside 5'-triphosphate = RNA(n+1) + diphosphate. Its function is as follows. DNA-dependent RNA polymerase catalyzes the transcription of DNA into RNA using the four ribonucleoside triphosphates as substrates. This chain is DNA-directed RNA polymerase subunit beta', found in Fusobacterium nucleatum subsp. nucleatum (strain ATCC 25586 / DSM 15643 / BCRC 10681 / CIP 101130 / JCM 8532 / KCTC 2640 / LMG 13131 / VPI 4355).